The sequence spans 91 residues: Cell division topological specificity factor (91 aa).

It belongs to the MinE family.

In terms of biological role, prevents the cell division inhibition by proteins MinC and MinD at internal division sites while permitting inhibition at polar sites. This ensures cell division at the proper site by restricting the formation of a division septum at the midpoint of the long axis of the cell. The sequence is that of Cell division topological specificity factor from Bradyrhizobium sp. (strain BTAi1 / ATCC BAA-1182).